The sequence spans 425 residues: Dihydroorotase (425 aa).

Zn(2+)-binding residues include histidine 61 and histidine 63. Substrate-binding positions include 63–65 (HLR) and asparagine 95. Zn(2+) contacts are provided by aspartate 153, histidine 180, and histidine 233. Asparagine 279 serves as a coordination point for substrate. Aspartate 306 provides a ligand contact to Zn(2+). The active site involves aspartate 306. A substrate-binding site is contributed by histidine 310.

It belongs to the metallo-dependent hydrolases superfamily. DHOase family. Class I DHOase subfamily. It depends on Zn(2+) as a cofactor.

The enzyme catalyses (S)-dihydroorotate + H2O = N-carbamoyl-L-aspartate + H(+). It participates in pyrimidine metabolism; UMP biosynthesis via de novo pathway; (S)-dihydroorotate from bicarbonate: step 3/3. In terms of biological role, catalyzes the reversible cyclization of carbamoyl aspartate to dihydroorotate. The polypeptide is Dihydroorotase (Geobacter sp. (strain M21)).